A 172-amino-acid chain; its full sequence is Small ribosomal subunit protein uS5 (172 aa).

The 64-residue stretch at 17-80 (LREKMISVNR…EQARRNMFKV (64 aa)) folds into the S5 DRBM domain.

The protein belongs to the universal ribosomal protein uS5 family. As to quaternary structure, part of the 30S ribosomal subunit. Contacts proteins S4 and S8.

Its function is as follows. With S4 and S12 plays an important role in translational accuracy. In terms of biological role, located at the back of the 30S subunit body where it stabilizes the conformation of the head with respect to the body. The sequence is that of Small ribosomal subunit protein uS5 from Burkholderia thailandensis (strain ATCC 700388 / DSM 13276 / CCUG 48851 / CIP 106301 / E264).